We begin with the raw amino-acid sequence, 248 residues long: Ubiquinone/menaquinone biosynthesis C-methyltransferase UbiE (248 aa).

S-adenosyl-L-methionine-binding residues include serine 68 and aspartate 92.

Belongs to the class I-like SAM-binding methyltransferase superfamily. MenG/UbiE family.

The catalysed reaction is a 2-demethylmenaquinol + S-adenosyl-L-methionine = a menaquinol + S-adenosyl-L-homocysteine + H(+). The enzyme catalyses a 2-methoxy-6-(all-trans-polyprenyl)benzene-1,4-diol + S-adenosyl-L-methionine = a 5-methoxy-2-methyl-3-(all-trans-polyprenyl)benzene-1,4-diol + S-adenosyl-L-homocysteine + H(+). Its pathway is quinol/quinone metabolism; menaquinone biosynthesis; menaquinol from 1,4-dihydroxy-2-naphthoate: step 2/2. The protein operates within cofactor biosynthesis; ubiquinone biosynthesis. Functionally, methyltransferase required for the conversion of demethylmenaquinol (DMKH2) to menaquinol (MKH2) and the conversion of 2-polyprenyl-6-methoxy-1,4-benzoquinol (DDMQH2) to 2-polyprenyl-3-methyl-6-methoxy-1,4-benzoquinol (DMQH2). This is Ubiquinone/menaquinone biosynthesis C-methyltransferase UbiE from Rickettsia africae (strain ESF-5).